Consider the following 156-residue polypeptide: Succinate dehydrogenase assembly factor 2-B, mitochondrial (156 aa).

Residues 1–24 (MLRQFIVSTVGRRLQLPMMAQSRL) constitute a mitochondrion transit peptide.

The protein belongs to the SDHAF2 family. Interacts with the flavoprotein subunit within the SDH catalytic dimer.

Its subcellular location is the mitochondrion matrix. Plays an essential role in the assembly of succinate dehydrogenase (SDH), an enzyme complex (also referred to as respiratory complex II) that is a component of both the tricarboxylic acid (TCA) cycle and the mitochondrial electron transport chain, and which couples the oxidation of succinate to fumarate with the reduction of ubiquinone (coenzyme Q) to ubiquinol. Required for flavinylation (covalent attachment of FAD) of the flavoprotein subunit of the SDH catalytic dimer. The polypeptide is Succinate dehydrogenase assembly factor 2-B, mitochondrial (Drosophila melanogaster (Fruit fly)).